Reading from the N-terminus, the 558-residue chain is Armadillo repeat-containing X-linked protein 5 (558 aa).

Composition is skewed to basic and acidic residues over residues 1–14 (MVDS…RGKA) and 139–156 (KSHD…REEA). 2 disordered regions span residues 1–34 (MVDS…NGKT) and 139–163 (KSHD…MKSS). ARM repeat units lie at residues 300–339 (CKSR…GISP), 422–461 (VKFE…CLSK), 463–503 (HANT…NINF), and 520–558 (SELI…ILKL).

The protein belongs to the eutherian X-chromosome-specific Armcx family.

This Pongo abelii (Sumatran orangutan) protein is Armadillo repeat-containing X-linked protein 5 (ARMCX5).